Reading from the N-terminus, the 134-residue chain is Phosphomevalonate dehydratase small subunit (134 aa).

Residue serine 62 is the Proton acceptor of the active site.

It belongs to the AcnX type II small subunit family. In terms of assembly, heterodimer composed of a large subunit (PMDh-L) and a small subunit (PMDh-S).

The enzyme catalyses (R)-5-phosphomevalonate = (2E)-3-methyl-5-phosphooxypent-2-enoate + H2O. It participates in isoprenoid biosynthesis; isopentenyl diphosphate biosynthesis via mevalonate pathway. In terms of biological role, component of a hydro-lyase that catalyzes the dehydration of mevalonate 5-phosphate (MVA5P) to form trans-anhydromevalonate 5-phosphate (tAHMP). Involved in the archaeal mevalonate (MVA) pathway, which provides fundamental precursors for isoprenoid biosynthesis, such as isopentenyl diphosphate (IPP) and dimethylallyl diphosphate (DMAPP). The sequence is that of Phosphomevalonate dehydratase small subunit from Pyrococcus furiosus (strain ATCC 43587 / DSM 3638 / JCM 8422 / Vc1).